The primary structure comprises 308 residues: Type II restriction enzyme MamI (308 aa).

It catalyses the reaction Endonucleolytic cleavage of DNA to give specific double-stranded fragments with terminal 5'-phosphates.. Functionally, a P subtype restriction enzyme that recognizes the double-stranded sequence 5'-GATNNNNATC-3' and cleaves after N-5. The protein is Type II restriction enzyme MamI of Microbacterium ammoniaphilum.